Consider the following 217-residue polypeptide: Very-long-chain (3R)-3-hydroxyacyl-CoA dehydratase PHS1 (217 aa).

Residues 1 to 11 are Cytoplasmic-facing; the sequence is MSKKLASPLSF. A helical transmembrane segment spans residues 12 to 29; that stretch reads LPLYNLLSAVGWSYLLYL. The Lumenal segment spans residues 30 to 47; the sequence is VISLYPKVGQPAFFYQTK. Residues 48-66 form a helical membrane-spanning segment; that stretch reads NVATLVQCGAIIEIINSFL. Residues 67-76 are Cytoplasmic-facing; it reads GVVRSPLLTT. The helical transmembrane segment at 77–94 threads the bilayer; the sequence is VAQVSSRLLVVLGIFQLL. At 95–99 the chain is on the lumenal side; sequence PNTSG. Residues 100-117 form a helical membrane-spanning segment; it reads VQSVVYISLLLAWSITEI. The Cytoplasmic segment spans residues 118-142; that stretch reads VRYLYYFFMLVFKNGAPKILILLRY. Residues 143-160 traverse the membrane as a helical segment; it reads NLFWILYPTGVASELRII. Active-site residues include tyrosine 149 and glutamate 156. Over 161–178 the chain is Lumenal; that stretch reads YCALNAAESQYSLLYKRI. The chain crosses the membrane as a helical span at residues 179–196; the sequence is LIAAMLAYIPGFPMLFLH. Residues 197–217 are Cytoplasmic-facing; the sequence is MVAQRKKVMKSLRSSFGKKLI. Residues 214–217 carry the Endoplasmic reticulum retention signal motif; the sequence is KKLI.

Belongs to the very long-chain fatty acids dehydratase HACD family.

The protein resides in the endoplasmic reticulum membrane. Its subcellular location is the vacuole membrane. It carries out the reaction a very-long-chain (3R)-3-hydroxyacyl-CoA = a very-long-chain (2E)-enoyl-CoA + H2O. The catalysed reaction is (3R)-hydroxyeicosanoyl-CoA = (2E)-eicosenoyl-CoA + H2O. The enzyme catalyses (3R)-hydroxydocosanoyl-CoA = (2E)-docosenoyl-CoA + H2O. It catalyses the reaction (3R)-hydroxyoctadecanoyl-CoA = (2E)-octadecenoyl-CoA + H2O. It carries out the reaction (3R)-hydroxytetracosanoyl-CoA = (2E)-tetracosenoyl-CoA + H2O. The catalysed reaction is (3R)-hydroxyhexacosanoyl-CoA = (2E)-hexacosenoyl-CoA + H2O. The enzyme catalyses (3R)-hydroxyhexadecanoyl-CoA = (2E)-hexadecenoyl-CoA + H2O. Its pathway is lipid metabolism; fatty acid biosynthesis. Functionally, catalyzes the third of the four reactions of the long-chain fatty acids elongation cycle. This endoplasmic reticulum-bound enzymatic process, allows the addition of two carbons to the chain of long- and very long-chain fatty acids/VLCFAs per cycle. This enzyme catalyzes the dehydration of the 3-hydroxyacyl-CoA intermediate into trans-2,3-enoyl-CoA, within each cycle of fatty acid elongation. Thereby, it participates in the production of VLCFAs of different chain lengths that are involved in multiple biological processes as precursors of membrane lipids and lipid mediators. This chain is Very-long-chain (3R)-3-hydroxyacyl-CoA dehydratase PHS1 (PHS1), found in Saccharomyces cerevisiae (strain ATCC 204508 / S288c) (Baker's yeast).